A 439-amino-acid polypeptide reads, in one-letter code: sn-glycerol-3-phosphate-binding periplasmic protein UgpB (439 aa).

A signal peptide spans 1-25; it reads MFNNSIHKVSICIALTLTFSANAMA. Positions 67, 91, 146, 272, 309, 348, and 399 each coordinate sn-glycerol 3-phosphate.

This sequence belongs to the bacterial solute-binding protein 1 family. In terms of assembly, the complex is composed of two ATP-binding proteins (UgpC), two transmembrane proteins (UgpA and UgpE) and a solute-binding protein (UgpB).

It is found in the periplasm. Functionally, part of the ABC transporter complex UgpBAEC involved in sn-glycerol-3-phosphate (G3P) import. Binds G3P. The chain is sn-glycerol-3-phosphate-binding periplasmic protein UgpB (ugpB) from Yersinia pestis bv. Antiqua (strain Antiqua).